The sequence spans 318 residues: MDLRAEQQQYNPYRIFSRSEWAKLRDDMPMTLAADEIAALRSMHDRLDLTEVEEIYLPLSRLLSIYVASMQRLFVAQRRFLGIQDRKVPYIIGVAGSVAVGKSTTARVLQALLARWSPGPKVDLITTDGFLFPNAVLERHGLMQKKGFPESYKLPMLLAFLSDIKAGRAPVRAPVYSHLTYDIVPKSWIEVSQPDILIVEGVNVLQTGRLPRDGRAVPVVSDFFDFSVYLDAEEPVLRDWYVKRFLALRDTAFHDPRSYFHRYALLSDDEATATAIAIWERTNRANLEDNILPTRPRATLILKKGADHVVEQVALRRL.

96–103 (GSVAVGKS) provides a ligand contact to ATP.

The protein belongs to the prokaryotic pantothenate kinase family.

It localises to the cytoplasm. It catalyses the reaction (R)-pantothenate + ATP = (R)-4'-phosphopantothenate + ADP + H(+). It participates in cofactor biosynthesis; coenzyme A biosynthesis; CoA from (R)-pantothenate: step 1/5. The protein is Pantothenate kinase of Nitrobacter hamburgensis (strain DSM 10229 / NCIMB 13809 / X14).